A 231-amino-acid chain; its full sequence is Lipoprotein-releasing system ATP-binding protein LolD (231 aa).

An ABC transporter domain is found at 11 to 231 (LQAEHLGKVY…HMENGRLQPD (221 aa)). An ATP-binding site is contributed by 47-54 (GASGSGKS).

It belongs to the ABC transporter superfamily. Lipoprotein translocase (TC 3.A.1.125) family. As to quaternary structure, the complex is composed of two ATP-binding proteins (LolD) and two transmembrane proteins (LolC and LolE).

Its subcellular location is the cell inner membrane. In terms of biological role, part of the ABC transporter complex LolCDE involved in the translocation of mature outer membrane-directed lipoproteins, from the inner membrane to the periplasmic chaperone, LolA. Responsible for the formation of the LolA-lipoprotein complex in an ATP-dependent manner. This chain is Lipoprotein-releasing system ATP-binding protein LolD, found in Bordetella bronchiseptica (strain ATCC BAA-588 / NCTC 13252 / RB50) (Alcaligenes bronchisepticus).